Consider the following 65-residue polypeptide: MSKMKTCKSAKKRYAFTSKGKIKYKKQNLRHILTKKSSKRRRKLGKSGLVSSFEVKRIKTLLPYA.

This sequence belongs to the bacterial ribosomal protein bL35 family.

This chain is Large ribosomal subunit protein bL35, found in Borrelia turicatae (strain 91E135).